Here is a 229-residue protein sequence, read N- to C-terminus: uncharacterized protein (229 aa).

The ABC transporter domain maps to leucine 2–alanine 229. Glycine 38–serine 45 contributes to the ATP binding site.

The protein belongs to the ABC transporter superfamily.

This is an uncharacterized protein from Bacillus subtilis (strain 168).